A 303-amino-acid polypeptide reads, in one-letter code: MIKQRTIKKEVKARGVGIHSGSVVNMTLIPAKEDHGVVFRRMDVGGKLVRAHSAFVNEVVLSTGLENQGVKVSTVEHLMSTFSALGIDNVLVELDSFEVPIMDGSSAPFIFLVQSAGIKEQDAYKKFFVIKDTIRVENGDSWAQVSKYEGFKVSLEIDFDHKKVKESGQKLSINFSKQCYLKEISRARTFGYMKDVEMMQRQNLALGASMDNAIALSDDDVLNEDGMRYQNEFVKHKILDIVGDLYLLGSNLIGHYEGYKTGHLLNNQLLSVILAKPDTWSIETFEEEGSPIQFYSEDWKNSL.

Zn(2+)-binding residues include His-77, His-236, and Asp-240. Residue His-263 is the Proton donor of the active site.

This sequence belongs to the LpxC family. The cofactor is Zn(2+).

The catalysed reaction is a UDP-3-O-[(3R)-3-hydroxyacyl]-N-acetyl-alpha-D-glucosamine + H2O = a UDP-3-O-[(3R)-3-hydroxyacyl]-alpha-D-glucosamine + acetate. It participates in glycolipid biosynthesis; lipid IV(A) biosynthesis; lipid IV(A) from (3R)-3-hydroxytetradecanoyl-[acyl-carrier-protein] and UDP-N-acetyl-alpha-D-glucosamine: step 2/6. Functionally, catalyzes the hydrolysis of UDP-3-O-myristoyl-N-acetylglucosamine to form UDP-3-O-myristoylglucosamine and acetate, the committed step in lipid A biosynthesis. This Ruthia magnifica subsp. Calyptogena magnifica protein is UDP-3-O-acyl-N-acetylglucosamine deacetylase.